The primary structure comprises 427 residues: MDAFRLAPCGPLRGRLRVPGDKSVTHRGLMLLALAEGEGRLFYPLKAGDTLSTARVLQALGAEVREEGPHFLVRGRGLRFQEPEDVLDCGNAGTLMRLLLGLLAGQEGLFAVLTGDASLRRRPMGRVVAPLRAMGARVDGREEGERAPLAVRGAPLRGLRYTLPVPSAQVKSALLLAGLFAEGVTEVEEPTPTRDHTERLFRHFGLPLEVEGRKVRTWRTGPFPAKDLVVPGDFSSAAFFLVAALVTPGSEVVVEGVGLNPTRTGLLTVLKAMGADLEWQVLEGEAGEPVGWVRARHSLLKGVAVDPGLIPLMVDEVPVLAAAAAWAEGETYIPGLSELRVKESDRVRAIAENLRALGVEVEEGPDWLRIRGGGVRPGRVRPFHDHRIAMAFAVAGLPVGVEVEEPHWAEISYPGFFQDLLRLCAAS.

3-phosphoshikimate contacts are provided by K22, S23, and R27. K22 is a binding site for phosphoenolpyruvate. The phosphoenolpyruvate site is built by G93 and R122. 3-phosphoshikimate-binding residues include S167, Q169, D315, and K342. Phosphoenolpyruvate is bound at residue Q169. The active-site Proton acceptor is D315. Residues R346 and R387 each coordinate phosphoenolpyruvate.

It belongs to the EPSP synthase family. As to quaternary structure, monomer.

It is found in the cytoplasm. The catalysed reaction is 3-phosphoshikimate + phosphoenolpyruvate = 5-O-(1-carboxyvinyl)-3-phosphoshikimate + phosphate. It participates in metabolic intermediate biosynthesis; chorismate biosynthesis; chorismate from D-erythrose 4-phosphate and phosphoenolpyruvate: step 6/7. Functionally, catalyzes the transfer of the enolpyruvyl moiety of phosphoenolpyruvate (PEP) to the 5-hydroxyl of shikimate-3-phosphate (S3P) to produce enolpyruvyl shikimate-3-phosphate and inorganic phosphate. The polypeptide is 3-phosphoshikimate 1-carboxyvinyltransferase (Thermus thermophilus (strain ATCC 27634 / DSM 579 / HB8)).